A 150-amino-acid chain; its full sequence is UPF0735 ACT domain-containing protein DSY2247 (150 aa).

An ACT domain is found at 74-149; that stretch reads TFSLTLENTA…GVRKIEVIGQ (76 aa).

The protein belongs to the UPF0735 family.

The protein is UPF0735 ACT domain-containing protein DSY2247 of Desulfitobacterium hafniense (strain Y51).